The following is a 129-amino-acid chain: Follitropin subunit beta (129 aa).

The N-terminal stretch at 1–18 (MKSVQFCFLFCCWKAICC) is a signal peptide. 6 cysteine pairs are disulfide-bonded: Cys21-Cys69, Cys35-Cys84, Cys38-Cys122, Cys46-Cys100, Cys50-Cys102, and Cys105-Cys112. Residues Asn25 and Asn42 are each glycosylated (N-linked (GlcNAc...) asparagine).

This sequence belongs to the glycoprotein hormones subunit beta family. Heterodimer. The active follitropin is a heterodimer composed of an alpha chain/CGA shared with other hormones and a unique beta chain/FSHB shown here.

It is found in the secreted. Together with the alpha chain CGA constitutes follitropin, the follicle-stimulating hormone, and provides its biological specificity to the hormone heterodimer. Binds FSHR, a G protein-coupled receptor, on target cells to activate downstream signaling pathways. Follitropin is involved in follicle development and spermatogenesis in reproductive organs. The polypeptide is Follitropin subunit beta (FSHB) (Oryctolagus cuniculus (Rabbit)).